Here is a 71-residue protein sequence, read N- to C-terminus: U3-scytotoxin-Sth1h (71 aa).

Residues 1–33 (MSQNSITSYKMGFAKHFFLFAVLLCATAMYSVA) form the signal peptide. The propeptide occupies 34 to 39 (EPAQER). 3 disulfides stabilise this stretch: cysteine 46–cysteine 60, cysteine 53–cysteine 64, and cysteine 59–cysteine 69.

In terms of tissue distribution, expressed by the venom gland.

Its subcellular location is the secreted. Functionally, probable insect neurotoxin with ion channel impairing activity. Does not show activity on 45 human receptors from 9 families (5-hydroxytryptamine, adrenergic, dopamine, muscarinic, histamine, neurotransmitter, opioid, sigma, and gaba(A) receptors). In vivo, when mixed with U3-SYTX-Sth1a does not cause paralytic or lethal activity when injected into crickets. It is noteworthy that crickets are evolutionarily distant from prey species. This is U3-scytotoxin-Sth1h from Scytodes thoracica (Spitting spider).